Reading from the N-terminus, the 546-residue chain is Probable bifunctional SAT/APS kinase (546 aa).

Residues 1 to 370 form a sulfate adenylyltransferase region; sequence MEKIKYLKSI…LAETYVPKHK (370 aa). Residues 371–546 form an adenylsulfate kinase region; it reads QGFCVWLTGL…FLKKEGFIKD (176 aa). An ATP-binding site is contributed by 379 to 386; sequence GLPCAGKS. Ser453 functions as the Phosphoserine intermediate in the catalytic mechanism.

In the N-terminal section; belongs to the sulfate adenylyltransferase family. It in the C-terminal section; belongs to the APS kinase family.

The enzyme catalyses sulfate + ATP + H(+) = adenosine 5'-phosphosulfate + diphosphate. It carries out the reaction adenosine 5'-phosphosulfate + ATP = 3'-phosphoadenylyl sulfate + ADP + H(+). It functions in the pathway sulfur metabolism; hydrogen sulfide biosynthesis; sulfite from sulfate: step 1/3. Its pathway is sulfur metabolism; hydrogen sulfide biosynthesis; sulfite from sulfate: step 2/3. This chain is Probable bifunctional SAT/APS kinase (sat/cysC), found in Aquifex aeolicus (strain VF5).